The primary structure comprises 149 residues: 3-dehydroquinate dehydratase (149 aa).

Tyr26 (proton acceptor) is an active-site residue. Substrate contacts are provided by Asn77, His83, and Asp90. Catalysis depends on His103, which acts as the Proton donor. Residues 104-105 (LS) and Arg114 each bind substrate.

It belongs to the type-II 3-dehydroquinase family. Homododecamer.

It carries out the reaction 3-dehydroquinate = 3-dehydroshikimate + H2O. Its pathway is metabolic intermediate biosynthesis; chorismate biosynthesis; chorismate from D-erythrose 4-phosphate and phosphoenolpyruvate: step 3/7. Catalyzes a trans-dehydration via an enolate intermediate. In Aeromonas hydrophila subsp. hydrophila (strain ATCC 7966 / DSM 30187 / BCRC 13018 / CCUG 14551 / JCM 1027 / KCTC 2358 / NCIMB 9240 / NCTC 8049), this protein is 3-dehydroquinate dehydratase.